A 189-amino-acid chain; its full sequence is MYLIAGLGNPGSKYEYTRHNAGFMVIDDLAKKLNIKVNKLKFKSLIGEGFIGDEKVILMKPSTYMNDSGKAILDCFNYYNLSAENLIVICDDIDIPFGTIRIKKKGSAGTHNGLKSIIYLIESQDFARIKVSVGQNDKYDLKDFVLSQFSKKEFEVLEKEIDMSSDAAIKIVEENVDYAMNNFNGKSVI.

Tyrosine 14 contributes to the tRNA binding site. The active-site Proton acceptor is the histidine 19. The tRNA site is built by tyrosine 64, asparagine 66, and asparagine 112.

The protein belongs to the PTH family. In terms of assembly, monomer.

It is found in the cytoplasm. The catalysed reaction is an N-acyl-L-alpha-aminoacyl-tRNA + H2O = an N-acyl-L-amino acid + a tRNA + H(+). In terms of biological role, hydrolyzes ribosome-free peptidyl-tRNAs (with 1 or more amino acids incorporated), which drop off the ribosome during protein synthesis, or as a result of ribosome stalling. Functionally, catalyzes the release of premature peptidyl moieties from peptidyl-tRNA molecules trapped in stalled 50S ribosomal subunits, and thus maintains levels of free tRNAs and 50S ribosomes. In Finegoldia magna (strain ATCC 29328 / DSM 20472 / WAL 2508) (Peptostreptococcus magnus), this protein is Peptidyl-tRNA hydrolase.